Consider the following 88-residue polypeptide: MSKRTVHNFERAVHLVMEGDPLGCDLIHLYYSKSPSLNAFINYLLCFYCPCKPPLEVCYKSVKYLYDTEKLSPSEYAFLIERLRKWNH.

This is an uncharacterized protein from Acidianus convivator (ABV).